The sequence spans 188 residues: CXXC-type zinc finger protein 4 (188 aa).

The segment at 1–20 is disordered; that stretch reads MHRNDSQRLGKPGGAPESLQ. The CXXC-type zinc finger occupies 122–163; it reads AKKKRKRCGVCVPCKRLINCGVCSSCRNRKTGHQICKFRKCE. Positions 129, 132, 135, 141, 144, 147, 157, and 162 each coordinate Zn(2+).

The protein resides in the cytoplasm. Its function is as follows. Acts as a negative regulator of the Wnt signaling pathway required for anterior neural structure formation. Binds preferentially to DNA containing cytidine-phosphate-guanosine (CpG) dinucleotides over CpH (H=A, T, and C), hemimethylated-CpG and hemimethylated-hydroxymethyl-CpG. The sequence is that of CXXC-type zinc finger protein 4 (cxxc4) from Xenopus tropicalis (Western clawed frog).